Consider the following 225-residue polypeptide: Biosynthetic peptidoglycan transglycosylase (225 aa).

Residues 8 to 28 form a helical membrane-spanning segment; that stretch reads VLLIFIGAILLIQLWIFSSLV.

Belongs to the glycosyltransferase 51 family.

It is found in the cell inner membrane. It carries out the reaction [GlcNAc-(1-&gt;4)-Mur2Ac(oyl-L-Ala-gamma-D-Glu-L-Lys-D-Ala-D-Ala)](n)-di-trans,octa-cis-undecaprenyl diphosphate + beta-D-GlcNAc-(1-&gt;4)-Mur2Ac(oyl-L-Ala-gamma-D-Glu-L-Lys-D-Ala-D-Ala)-di-trans,octa-cis-undecaprenyl diphosphate = [GlcNAc-(1-&gt;4)-Mur2Ac(oyl-L-Ala-gamma-D-Glu-L-Lys-D-Ala-D-Ala)](n+1)-di-trans,octa-cis-undecaprenyl diphosphate + di-trans,octa-cis-undecaprenyl diphosphate + H(+). Its pathway is cell wall biogenesis; peptidoglycan biosynthesis. Functionally, peptidoglycan polymerase that catalyzes glycan chain elongation from lipid-linked precursors. This is Biosynthetic peptidoglycan transglycosylase from Acinetobacter baumannii (strain AB307-0294).